The following is a 177-amino-acid chain: Large ribosomal subunit protein uL6 (177 aa).

It belongs to the universal ribosomal protein uL6 family. In terms of assembly, part of the 50S ribosomal subunit.

In terms of biological role, this protein binds to the 23S rRNA, and is important in its secondary structure. It is located near the subunit interface in the base of the L7/L12 stalk, and near the tRNA binding site of the peptidyltransferase center. The polypeptide is Large ribosomal subunit protein uL6 (Bradyrhizobium sp. (strain BTAi1 / ATCC BAA-1182)).